The primary structure comprises 307 residues: Estrogen receptor (307 aa).

The nuclear receptor DNA-binding region spans 1-43; it reads GHNDYMCPATNQCTIDKNRRKSCQACRLRKCYEVGMMKGGIRK. Residues 7-31 form an NR C4-type zinc finger; sequence CPATNQCTIDKNRRKSCQACRLRKC. The interval 44-95 is hinge; that stretch reads DRRGGRILKHKRQREEHDNRNAGAIVERRSPNLWPSPLMITHNKKNSPALSL. In terms of domain architecture, NR LBD spans 96–307; sequence TADQIVSALL…HFRHMSNKGM (212 aa).

It belongs to the nuclear hormone receptor family. NR3 subfamily. As to quaternary structure, binds DNA as a homodimer. Can form a heterodimer with ER-beta.

It localises to the nucleus. Functionally, the steroid hormones and their receptors are involved in the regulation of eukaryotic gene expression and affect cellular proliferation and differentiation in target tissues. The polypeptide is Estrogen receptor (ESR1) (Aspidoscelis uniparens (Desert grassland whiptail lizard)).